The primary structure comprises 861 residues: Leucine--tRNA ligase (861 aa).

Positions 42-52 (PYPSGRLHMGH) match the 'HIGH' region motif. A 'KMSKS' region motif is present at residues 619 to 623 (KMSKS). Lysine 622 contacts ATP.

It belongs to the class-I aminoacyl-tRNA synthetase family.

It localises to the cytoplasm. The enzyme catalyses tRNA(Leu) + L-leucine + ATP = L-leucyl-tRNA(Leu) + AMP + diphosphate. The sequence is that of Leucine--tRNA ligase from Haemophilus influenzae (strain PittEE).